The chain runs to 953 residues: Coatomer subunit beta (953 aa).

At Thr-2 the chain carries N-acetylthreonine. HEAT repeat units follow at residues 96–131 (HEMILVCDAYRKDLQHPNEFIRGSTLRFLCKLKEAE), 132–168 (LLEPLMPAIRACLEHRHSYVRRNAVLAIYTIYRNFEN), 240–276 (SERARFIRCIYNLLQSSSPAVKYEAAGTLVTLSSAPT), 277–314 (AIKAAAQCYIDLIIKESDNNVKLIVLDRLVELKEHPAH), 316–353 (RVLQDLVMDILRVLSTPDLEVRKKTLQLALDLVSSRNV), and 396–433 (DMAANVIPVLMEFLSDSNEAAAADVLEFVREAIQRFDN). Lys-494 bears the N6-acetyllysine mark.

In terms of assembly, oligomeric complex that consists of at least the alpha, beta, beta', gamma, delta, epsilon and zeta subunits. Interacts with SCYL1. Interacts with CAPN8. Interacts with COPG1. Interacts with ARF1 (myristoylated); this interaction is required for binding of COPB1 to Golgi membranes. Interacts (via trunk domain) with ARF1 (via switch I region); the interaction is direct. Interacts with KCNK2 (via N-terminus); this interaction increases the channel-mediated whole cell currents and promotes plasma membrane expression of KCNK2. Interacts with PRKCE. Interacts with STX17. Interacts with TMEM115. Interacts with TMEM41B. In terms of processing, proteolytically cleaved between Ser-528 and Ser-529 by CAPN8.

The protein resides in the cytoplasm. Its subcellular location is the golgi apparatus membrane. It is found in the cytoplasmic vesicle. The protein localises to the COPI-coated vesicle membrane. It localises to the cell membrane. The protein resides in the endoplasmic reticulum-Golgi intermediate compartment. Its subcellular location is the microsome membrane. The coatomer is a cytosolic protein complex that binds to dilysine motifs and reversibly associates with Golgi non-clathrin-coated vesicles, which further mediate biosynthetic protein transport from the ER, via the Golgi up to the trans Golgi network. Coatomer complex is required for budding from Golgi membranes, and is essential for the retrograde Golgi-to-ER transport of dilysine-tagged proteins. In mammals, the coatomer can only be recruited by membranes associated to ADP-ribosylation factors (ARFs), which are small GTP-binding proteins; the complex also influences the Golgi structural integrity, as well as the processing, activity, and endocytic recycling of LDL receptors. Involved in the Golgi disassembly and reassembly processes during cell cycle. Involved in autophagy by playing a role in early endosome function. Plays a role in organellar compartmentalization of secretory compartments including endoplasmic reticulum (ER)-Golgi intermediate compartment (ERGIC), Golgi, trans-Golgi network (TGN) and recycling endosomes, and in biosynthetic transport of CAV1. Plays a functional role in facilitating the transport of kappa-type opioid receptor mRNAs into axons and enhances translation of these proteins in the axonal compartment of dorsal root ganglion (DRG) cells. Required for limiting lipid storage in lipid droplets. Involved in lipid homeostasis by regulating the presence of perilipin family members PLIN2 and PLIN3 at the lipid droplet surface and promoting the association of adipocyte triglyceride lipase (PNPLA2) with the lipid droplet surface to mediate lipolysis. The sequence is that of Coatomer subunit beta (Copb1) from Rattus norvegicus (Rat).